Reading from the N-terminus, the 270-residue chain is MRIALGIQYDGAAFCGWQSQPHGKTVQDALERALAEFAQTSLHTTVAGRTDTGVHGLGQVVHFDTDLDRADFSWVRGTNAFLPSTVAVQWAKPMPDTFHARFAAFERTYYYALYVHPVRSPMLAARAGWVHTPLDVDAMREAAEHLVGEHDFSAFRSSECQAKSPVKHLYQIGIRPDGDFIHFRFRANAFLHHMVRNLMGCLVAVGRGRYPASWLAEVLESRDRGCAAPTFMPEGLYLAHVGYPAEFAVPPAQLGSVPWSSVWADLDGRP.

The Nucleophile role is filled by aspartate 51. Residue tyrosine 109 participates in substrate binding.

It belongs to the tRNA pseudouridine synthase TruA family. As to quaternary structure, homodimer.

It catalyses the reaction uridine(38/39/40) in tRNA = pseudouridine(38/39/40) in tRNA. Formation of pseudouridine at positions 38, 39 and 40 in the anticodon stem and loop of transfer RNAs. The protein is tRNA pseudouridine synthase A of Burkholderia thailandensis (strain ATCC 700388 / DSM 13276 / CCUG 48851 / CIP 106301 / E264).